The following is a 797-amino-acid chain: Calcium-transporting ATPase CtpE (797 aa).

3 helical membrane passes run Leu55–Ile75, Ile215–Leu235, and Val254–Val274. Asp301 acts as the 4-aspartylphosphate intermediate in catalysis. Mg(2+) contacts are provided by Asp301, Thr303, and Asp536. 6 consecutive transmembrane segments (helical) span residues Thr601–Leu621, Ile633–Ala653, Val667–Leu687, Ala703–Ala723, Trp729–Leu749, and Thr764–Ile784.

It belongs to the cation transport ATPase (P-type) (TC 3.A.3) family.

It localises to the cell membrane. It carries out the reaction Ca(2+)(in) + ATP + H2O = Ca(2+)(out) + ADP + phosphate + H(+). Its function is as follows. P-type ATPase involved in specific uptake of calcium. The protein is Calcium-transporting ATPase CtpE (ctpE) of Mycobacterium tuberculosis (strain CDC 1551 / Oshkosh).